Here is a 324-residue protein sequence, read N- to C-terminus: Protease HtpX homolog (324 aa).

The next 2 helical transmembrane spans lie at 7-24 (ALLL…GYLI) and 29-46 (GALI…FTYW). His130 lines the Zn(2+) pocket. Glu131 is a catalytic residue. A Zn(2+)-binding site is contributed by His134. Helical transmembrane passes span 145–165 (ITAT…FFGG) and 172–192 (GPGL…AMLV). Glu201 lines the Zn(2+) pocket. Residues 288–305 (PASTFSRGAGTAASSGTP) show a composition bias toward polar residues. A disordered region spans residues 288-324 (PASTFSRGAGTAASSGTPRGTGRSPWGGQPRGRGPWG).

It belongs to the peptidase M48B family. Zn(2+) is required as a cofactor.

It localises to the cell inner membrane. The protein is Protease HtpX homolog of Rhodopseudomonas palustris (strain TIE-1).